A 238-amino-acid chain; its full sequence is Sugar fermentation stimulation protein homolog (238 aa).

Belongs to the SfsA family.

The chain is Sugar fermentation stimulation protein homolog from Pseudomonas entomophila (strain L48).